Reading from the N-terminus, the 267-residue chain is ATP synthase subunit a (267 aa).

The next 5 membrane-spanning stretches (helical) occupy residues 38-58 (WHIDSLLFSVGLGVLFLFVFY), 98-118 (IAPLALTIFVWILLMNTMDLI), 145-165 (NITFGLSLSVFALIVFYSIKI), 208-228 (LFGNLYAGELIFILIALMPWW), and 238-258 (AIFHILVIVLQAFIFMMLTIV).

The protein belongs to the ATPase A chain family. As to quaternary structure, F-type ATPases have 2 components, CF(1) - the catalytic core - and CF(0) - the membrane proton channel. CF(1) has five subunits: alpha(3), beta(3), gamma(1), delta(1), epsilon(1). CF(0) has three main subunits: a(1), b(2) and c(9-12). The alpha and beta chains form an alternating ring which encloses part of the gamma chain. CF(1) is attached to CF(0) by a central stalk formed by the gamma and epsilon chains, while a peripheral stalk is formed by the delta and b chains.

It is found in the cell inner membrane. Functionally, key component of the proton channel; it plays a direct role in the translocation of protons across the membrane. This Psychromonas ingrahamii (strain DSM 17664 / CCUG 51855 / 37) protein is ATP synthase subunit a.